Here is a 77-residue protein sequence, read N- to C-terminus: UPF0291 protein EAT1b_0405 (77 aa).

A disordered region spans residues 53 to 77; the sequence is KVVDPDGNDVTPEKLKEDQKRYRGE. The span at 63 to 77 shows a compositional bias: basic and acidic residues; the sequence is TPEKLKEDQKRYRGE.

This sequence belongs to the UPF0291 family.

It localises to the cytoplasm. This is UPF0291 protein EAT1b_0405 from Exiguobacterium sp. (strain ATCC BAA-1283 / AT1b).